Consider the following 225-residue polypeptide: Leucyl/phenylalanyl-tRNA--protein transferase (225 aa).

The protein belongs to the L/F-transferase family.

The protein resides in the cytoplasm. It catalyses the reaction N-terminal L-lysyl-[protein] + L-leucyl-tRNA(Leu) = N-terminal L-leucyl-L-lysyl-[protein] + tRNA(Leu) + H(+). The enzyme catalyses N-terminal L-arginyl-[protein] + L-leucyl-tRNA(Leu) = N-terminal L-leucyl-L-arginyl-[protein] + tRNA(Leu) + H(+). The catalysed reaction is L-phenylalanyl-tRNA(Phe) + an N-terminal L-alpha-aminoacyl-[protein] = an N-terminal L-phenylalanyl-L-alpha-aminoacyl-[protein] + tRNA(Phe). Functionally, functions in the N-end rule pathway of protein degradation where it conjugates Leu, Phe and, less efficiently, Met from aminoacyl-tRNAs to the N-termini of proteins containing an N-terminal arginine or lysine. This Nitrobacter hamburgensis (strain DSM 10229 / NCIMB 13809 / X14) protein is Leucyl/phenylalanyl-tRNA--protein transferase.